The sequence spans 539 residues: Cytochrome c oxidase subunit 1 homolog, bacteroid (539 aa).

Helical transmembrane passes span 4-24 (TVEM…AGLA), 28-48 (LFGA…LVLM), and 75-95 (GVVA…VVAL). His117 is a binding site for heme b. A run of 8 helical transmembrane segments spans residues 118–138 (TSAV…FYVV), 154–174 (FVFW…LLGI), 187–207 (VDLW…GTIM), 214–234 (IYVA…LHVV), 265–285 (GHNA…YYFI), 298–318 (LSII…PHHL), 330–350 (LGMV…INGL), and 368–388 (MMVM…MMSI). 3 residues coordinate Cu cation: His266, His316, and His317. The heme b site is built by His404 and His406. A run of 4 helical transmembrane segments spans residues 405–425 (VHSG…YYLV), 443–463 (HFWL…VAGI), 475–495 (QGFL…YYVM), and 499–519 (GGAL…MTIL).

The protein belongs to the heme-copper respiratory oxidase family. The cofactor is Cu(2+). It depends on heme b as a cofactor.

Its subcellular location is the cell membrane. It carries out the reaction 4 Fe(II)-[cytochrome c] + O2 + 8 H(+)(in) = 4 Fe(III)-[cytochrome c] + 2 H2O + 4 H(+)(out). It participates in energy metabolism; oxidative phosphorylation. In terms of biological role, cytochrome c oxidase is the component of the respiratory chain that catalyzes the reduction of oxygen to water. Subunits 1-3 form the functional core of the enzyme complex. Co I is the catalytic subunit of the enzyme. Electrons originating in cytochrome c or a quinol are transferred to the bimetallic center formed by a high-spin heme and copper B. This Rhizobium meliloti (strain 1021) (Ensifer meliloti) protein is Cytochrome c oxidase subunit 1 homolog, bacteroid (fixN).